Here is an 875-residue protein sequence, read N- to C-terminus: Transcription factor tenR (875 aa).

Positions 16-44 (CSECRRRKIRCDRGFPCGPCRKSLPALSC) form a DNA-binding region, zn(2)-C6 fungal-type. Disordered regions lie at residues 54–73 (AASA…PKVN), 136–172 (DHEK…GVNP), and 620–642 (PHED…TGSR). 2 stretches are compositionally biased toward polar residues: residues 153–168 (PGST…SHSA) and 627–642 (SIQS…TGSR).

It is found in the nucleus. In terms of biological role, transcription factor that positively regulates the expression of the genes that mediate the biosynthesis of tenellin-type 2-pyridones, iron-chelating compounds involved in iron stress tolerance, competition with the natural competitor fungus Metarhizium robertsii and insect hosts infection. This Beauveria bassiana (strain ARSEF 2860) (White muscardine disease fungus) protein is Transcription factor tenR.